The sequence spans 89 residues: Small ribosomal subunit protein uS15 (89 aa).

Belongs to the universal ribosomal protein uS15 family. Part of the 30S ribosomal subunit. Forms a bridge to the 50S subunit in the 70S ribosome, contacting the 23S rRNA.

Functionally, one of the primary rRNA binding proteins, it binds directly to 16S rRNA where it helps nucleate assembly of the platform of the 30S subunit by binding and bridging several RNA helices of the 16S rRNA. Its function is as follows. Forms an intersubunit bridge (bridge B4) with the 23S rRNA of the 50S subunit in the ribosome. The sequence is that of Small ribosomal subunit protein uS15 from Anaeromyxobacter sp. (strain Fw109-5).